Reading from the N-terminus, the 436-residue chain is Protein Z-dependent protease inhibitor (436 aa).

A signal peptide spans methionine 1–serine 20. N-linked (GlcNAc...) asparagine glycans are attached at residues asparagine 23, asparagine 42, and asparagine 69. The segment at alanine 128–serine 145 is heparin-binding. 3 N-linked (GlcNAc...) asparagine glycosylation sites follow: asparagine 172, asparagine 189, and asparagine 287.

It belongs to the serpin family. In terms of processing, phosphorylated by FAM20C in the extracellular medium. In terms of tissue distribution, expressed by the liver and secreted in plasma.

It is found in the secreted. Functionally, inhibits activity of the coagulation protease factor Xa in the presence of PROZ, calcium and phospholipids. Also inhibits factor XIa in the absence of cofactors. The protein is Protein Z-dependent protease inhibitor (Serpina10) of Rattus norvegicus (Rat).